Consider the following 339-residue polypeptide: Ribosome biogenesis protein BRX1 homolog (339 aa).

The tract at residues 1–34 is disordered; sequence MSAYKRKRGSLPEVATNTKKAKKQLAGSEQEATA. In terms of domain architecture, Brix spans 53–242; sequence ERVLIFSSRG…LIKIFKGSFG (190 aa). The segment at 304–339 is disordered; sequence AEEKPQVIETEPPAPKPKMKRKDKQFKRQRMAKKRM. Over residues 320–339 the composition is skewed to basic residues; that stretch reads PKMKRKDKQFKRQRMAKKRM.

The protein belongs to the BRX1 family. As to expression, ubiquitous.

It is found in the nucleus. Its subcellular location is the nucleolus. Required for biogenesis of the 60S ribosomal subunit. This Xenopus laevis (African clawed frog) protein is Ribosome biogenesis protein BRX1 homolog (brix1).